The primary structure comprises 123 residues: Cytochrome c-555 (123 aa).

A signal peptide spans 1–27 (MDHKKTSIRTTALAALVLGAVAAPAFS). 4 residues coordinate heme c: Cys-46, Cys-49, His-50, and Met-86.

Post-translationally, binds 1 heme c group covalently per subunit.

This chain is Cytochrome c-555, found in Methylococcus capsulatus (strain ATCC 33009 / NCIMB 11132 / Bath).